Consider the following 249-residue polypeptide: Small ribosomal subunit protein eS6 (249 aa).

Over residues 216–229 (RMKEAKEKRQEQIA) the composition is skewed to basic and acidic residues. A disordered region spans residues 216–249 (RMKEAKEKRQEQIAKRRRLSSLRASTSKSESSQK). Phosphoserine occurs at positions 235, 236, 240, 244, and 247. A compositionally biased stretch (low complexity) spans 236–249 (SLRASTSKSESSQK).

The protein belongs to the eukaryotic ribosomal protein eS6 family. As to quaternary structure, component of the small ribosomal subunit. Post-translationally, ribosomal protein S6 is the major substrate of protein kinases in eukaryote ribosomes. The phosphorylation is stimulated by growth factors, tumor promoting agents, and mitogens. It is dephosphorylated at growth arrest.

It localises to the cytoplasm. Functionally, component of the 40S small ribosomal subunit. Plays an important role in controlling cell growth and proliferation through the selective translation of particular classes of mRNA. This Oncorhynchus mykiss (Rainbow trout) protein is Small ribosomal subunit protein eS6 (rps6).